The following is a 213-amino-acid chain: Ras-related protein RabK1 (213 aa).

14–21 (GDRMVGKL) provides a ligand contact to GTP. The short motif at 36 to 43 (GNSIPFDF) is the Effector region element. Residues 61–65 (NTHGS) and 119–122 (TKSD) each bind GTP.

This sequence belongs to the small GTPase superfamily. Rab family.

The chain is Ras-related protein RabK1 (rabK1) from Dictyostelium discoideum (Social amoeba).